The following is a 461-amino-acid chain: Cysteine--tRNA ligase (461 aa).

Position 28 (cysteine 28) interacts with Zn(2+). The 'HIGH' region signature appears at 30-40; it reads ITVYDLCHIGH. Zn(2+) is bound by residues cysteine 209, histidine 234, and glutamate 238. The 'KMSKS' region signature appears at 266 to 270; sequence KMSKS. Position 269 (lysine 269) interacts with ATP.

Belongs to the class-I aminoacyl-tRNA synthetase family. In terms of assembly, monomer. It depends on Zn(2+) as a cofactor.

Its subcellular location is the cytoplasm. It carries out the reaction tRNA(Cys) + L-cysteine + ATP = L-cysteinyl-tRNA(Cys) + AMP + diphosphate. This is Cysteine--tRNA ligase from Salmonella agona (strain SL483).